Here is a 373-residue protein sequence, read N- to C-terminus: uncharacterized protein (373 aa).

Residues 180–202 (YYVVALGTLALGSILGYTAKYVW) form a helical membrane-spanning segment.

It is found in the membrane. This is an uncharacterized protein from Rickettsia prowazekii (strain Madrid E).